The chain runs to 287 residues: MKPLASLRDIKTRINATKKTSQITKAMEMVSTSKLNRAAKREIVRSYMEKIQEVVANVASRGRSHPMLVSRPVKKTGYLVITSDRGLAGAYNSNVVRLVYPKRSKNAMLPPDEYAIIVIGRVGLSFFRKRNMPVILDITRLPDQPSFADIKEIARKTVGLFADGTFDELYMYYNHYVSAIQQEVTERKLLPLTDFLAENKQRTVYEFEPSQEEILDVLLPQYAESLIYGALLDAKASEHAARMTAMKNATDNANDVIRTLTLSYNRARQAAITQEITEIVAGRNALQ.

This sequence belongs to the ATPase gamma chain family. F-type ATPases have 2 components, CF(1) - the catalytic core - and CF(0) - the membrane proton channel. CF(1) has five subunits: alpha(3), beta(3), gamma(1), delta(1), epsilon(1). CF(0) has three main subunits: a, b and c.

It localises to the cell membrane. Produces ATP from ADP in the presence of a proton gradient across the membrane. The gamma chain is believed to be important in regulating ATPase activity and the flow of protons through the CF(0) complex. The protein is ATP synthase gamma chain of Geobacillus stearothermophilus (Bacillus stearothermophilus).